A 485-amino-acid chain; its full sequence is Rop guanine nucleotide exchange factor 2 (485 aa).

Residues 1-36 (MENLPNHEENDDVGYHQSPGPIDPNDHSASETPVYS) are disordered. Positions 107–485 (LAVQEISEPE…YVDKTMRGEE (379 aa)) constitute a PRONE domain.

In terms of assembly, interacts with ARC10/ROP11. In terms of tissue distribution, expressed in the vascular tissues of roots, leaves, sepals, petals and siliques.

In terms of biological role, guanine-nucleotide exchange factor (GEF) that acts as an activator of Rop (Rho of plants) GTPases by promoting the exchange of GDP for GTP. The protein is Rop guanine nucleotide exchange factor 2 (ROPGEF2) of Arabidopsis thaliana (Mouse-ear cress).